The primary structure comprises 153 residues: Iron-sulfur cluster assembly scaffold protein IscU 1 (153 aa).

[2Fe-2S] cluster contacts are provided by cysteine 33, cysteine 58, histidine 101, and cysteine 102.

This sequence belongs to the NifU family. In terms of assembly, forms a heterotetramer with IscS2.

Functionally, a scaffold on which IscS assembles Fe-S clusters. Subsequently gives the nascent cluster to other proteins. It is likely that Fe-S cluster coordination is flexible as the role of this complex is to build and then hand off Fe-S clusters. The protein is Iron-sulfur cluster assembly scaffold protein IscU 1 (iscU1) of Archaeoglobus fulgidus (strain ATCC 49558 / DSM 4304 / JCM 9628 / NBRC 100126 / VC-16).